The primary structure comprises 449 residues: UDP-N-acetylmuramoylalanine--D-glutamate ligase (449 aa).

118–124 serves as a coordination point for ATP; sequence GTNGKTT.

The protein belongs to the MurCDEF family.

The protein resides in the cytoplasm. The enzyme catalyses UDP-N-acetyl-alpha-D-muramoyl-L-alanine + D-glutamate + ATP = UDP-N-acetyl-alpha-D-muramoyl-L-alanyl-D-glutamate + ADP + phosphate + H(+). Its pathway is cell wall biogenesis; peptidoglycan biosynthesis. Functionally, cell wall formation. Catalyzes the addition of glutamate to the nucleotide precursor UDP-N-acetylmuramoyl-L-alanine (UMA). This chain is UDP-N-acetylmuramoylalanine--D-glutamate ligase, found in Staphylococcus aureus (strain MSSA476).